The primary structure comprises 966 residues: Catenin alpha-2 (966 aa).

Basic and acidic residues predominate over residues 924-940 (PEKKPLVKREKPEEYQT). A disordered region spans residues 924-952 (PEKKPLVKREKPEEYQTRVRRGSQKKHIS). Basic residues predominate over residues 941-951 (RVRRGSQKKHI).

This sequence belongs to the vinculin/alpha-catenin family.

It is found in the cell membrane. The protein resides in the cytoplasm. Its subcellular location is the cytoskeleton. It localises to the cell junction. The protein localises to the adherens junction. It is found in the cell projection. The protein resides in the axon. Its subcellular location is the nucleus. May function as a linker between cadherin adhesion receptors and the cytoskeleton to regulate cell-cell adhesion and differentiation in the nervous system. The protein is Catenin alpha-2 (ctnna2) of Xenopus laevis (African clawed frog).